The following is a 264-amino-acid chain: MKIEAVIFDWAGTTVDYGCFAPLEVFMEIFHKRGVVITAEEARKPMGLLKIDHVRALTEMPRIASEWNRVFGQLPTETDIQEMYEEFEEILFTILPRYASPIHGVKEVIASLRERGIKIGSTTGYTREMMDIVAKEAALQGYKPDFLVTPDDVPAGRPYPWMCYKNAMELGVYPMNHMIKIGDTVSDMKEGRNAGMWTVGVILGSSELGLSEEEVENMDPVELREKIEVVRNRFVENGAHFTIETMQELETVMEHIEKQQLIIS.

Residue aspartate 9 is the Nucleophile of the active site. 2 residues coordinate Mg(2+): aspartate 9 and alanine 11. Residue lysine 50 is the Schiff-base intermediate with substrate of the active site. Aspartate 183 contacts Mg(2+).

Belongs to the HAD-like hydrolase superfamily. PhnX family. As to quaternary structure, homodimer. Mg(2+) serves as cofactor.

The catalysed reaction is phosphonoacetaldehyde + H2O = acetaldehyde + phosphate + H(+). Its function is as follows. Involved in phosphonate degradation. This Bacillus cereus (strain ATCC 10987 / NRS 248) protein is Phosphonoacetaldehyde hydrolase.